The following is a 698-amino-acid chain: Sialic acid-binding Ig-like lectin 11 (698 aa).

The N-terminal stretch at 1–27 (MVPGQAQPQSPEMLLLPLLLPVLGAGS) is a signal peptide. Residues 28–561 (LNKDPSYSLQ…KLEHGGGLGL (534 aa)) lie on the Extracellular side of the membrane. In terms of domain architecture, Ig-like V-type spans 31-134 (DPSYSLQVQR…DEAWYFFRVE (104 aa)). Intrachain disulfides connect cysteine 49–cysteine 186, cysteine 54–cysteine 114, and cysteine 177–cysteine 228. N-linked (GlcNAc...) asparagine glycans are attached at residues asparagine 55 and asparagine 90. Residue arginine 132 coordinates N-acetylneuraminate. Ig-like C2-type domains lie at 159–244 (PDVY…RTVR), 251–350 (PKDL…LDLS), and 355–452 (PENL…LSLS). Residue asparagine 262 is glycosylated (N-linked (GlcNAc...) asparagine). Cysteine 287 and cysteine 334 are disulfide-bonded. 2 N-linked (GlcNAc...) asparagine glycosylation sites follow: asparagine 366 and asparagine 375. Cysteine 391 and cysteine 436 are joined by a disulfide. N-linked (GlcNAc...) asparagine glycosylation is found at asparagine 497 and asparagine 515. A helical membrane pass occupies residues 562–584 (GAALGAGVAALLAFCSCLVVFRV). At 585 to 698 (KICRKEARKR…EREMSGMVPK (114 aa)) the chain is on the cytoplasmic side. The disordered stretch occupies residues 596–635 (AAEQDVPSTLGPISQGHQHECSAGSSQDHPPPGAATYTPG). Residues 642–647 (LHYASL) carry the ITIM motif motif. Residue tyrosine 668 is modified to Phosphotyrosine. The interval 675–698 (TGQPLRGPGFGLQLEREMSGMVPK) is disordered.

This sequence belongs to the immunoglobulin superfamily. SIGLEC (sialic acid binding Ig-like lectin) family. In terms of assembly, interacts with PTPN6/SHP-1 and PTPN11/SHP-2 upon phosphorylation. Phosphorylated on tyrosine residues. As to expression, expressed by macrophages in various tissues including Kupffer cells. Also found in brain microglia.

It is found in the membrane. In terms of biological role, putative adhesion molecule that mediates sialic-acid dependent binding to cells. Preferentially binds to alpha-2,8-linked sialic acid. The sialic acid recognition site may be masked by cis interactions with sialic acids on the same cell surface. In the immune response, may act as an inhibitory receptor upon ligand induced tyrosine phosphorylation by recruiting cytoplasmic phosphatase(s) via their SH2 domain(s) that block signal transduction through dephosphorylation of signaling molecules. The protein is Sialic acid-binding Ig-like lectin 11 (SIGLEC11) of Homo sapiens (Human).